The primary structure comprises 96 residues: uncharacterized protein (96 aa).

Helical transmembrane passes span 14-34 (FIEG…KYWA), 38-58 (LAVT…LLVL), and 67-87 (WPLK…GNFL).

It localises to the cell membrane. This is an uncharacterized protein from Bacillus subtilis (strain 168).